We begin with the raw amino-acid sequence, 144 residues long: 3-hydroxyacyl-[acyl-carrier-protein] dehydratase FabZ (144 aa).

H48 is an active-site residue.

The protein belongs to the thioester dehydratase family. FabZ subfamily.

The protein localises to the cytoplasm. It catalyses the reaction a (3R)-hydroxyacyl-[ACP] = a (2E)-enoyl-[ACP] + H2O. In terms of biological role, involved in unsaturated fatty acids biosynthesis. Catalyzes the dehydration of short chain beta-hydroxyacyl-ACPs and long chain saturated and unsaturated beta-hydroxyacyl-ACPs. The protein is 3-hydroxyacyl-[acyl-carrier-protein] dehydratase FabZ of Bacillus pumilus (strain SAFR-032).